An 809-amino-acid polypeptide reads, in one-letter code: Phenylalanine--tRNA ligase beta subunit (809 aa).

The 115-residue stretch at 39–153 (APPFSQIVVG…EDTPVGADIR (115 aa)) folds into the tRNA-binding domain. Residues 404–479 (PKREPVRMRV…RIYGFEQIPA (76 aa)) form the B5 domain. Residues D457, D463, E466, and E467 each coordinate Mg(2+). Residues 706–808 (PRVPAVTRDI…AGDAFGARLR (103 aa)) enclose the FDX-ACB domain.

Belongs to the phenylalanyl-tRNA synthetase beta subunit family. Type 1 subfamily. As to quaternary structure, tetramer of two alpha and two beta subunits. It depends on Mg(2+) as a cofactor.

It is found in the cytoplasm. The enzyme catalyses tRNA(Phe) + L-phenylalanine + ATP = L-phenylalanyl-tRNA(Phe) + AMP + diphosphate + H(+). In Ralstonia nicotianae (strain ATCC BAA-1114 / GMI1000) (Ralstonia solanacearum), this protein is Phenylalanine--tRNA ligase beta subunit.